A 277-amino-acid chain; its full sequence is Phosphatidylglycerol--prolipoprotein diacylglyceryl transferase (277 aa).

The next 3 membrane-spanning stretches (helical) occupy residues 16–36, 62–82, and 101–121; these read FFQI…FYFL, LLFF…VLFY, and GMAF…FAHL. Residue Arg-145 participates in a 1,2-diacyl-sn-glycero-3-phospho-(1'-sn-glycerol) binding. A run of 2 helical transmembrane segments spans residues 214–234 and 243–263; these read PIWG…RFIA and FLGL…PMIV.

Belongs to the Lgt family.

The protein resides in the cell inner membrane. The catalysed reaction is L-cysteinyl-[prolipoprotein] + a 1,2-diacyl-sn-glycero-3-phospho-(1'-sn-glycerol) = an S-1,2-diacyl-sn-glyceryl-L-cysteinyl-[prolipoprotein] + sn-glycerol 1-phosphate + H(+). The protein operates within protein modification; lipoprotein biosynthesis (diacylglyceryl transfer). Its function is as follows. Catalyzes the transfer of the diacylglyceryl group from phosphatidylglycerol to the sulfhydryl group of the N-terminal cysteine of a prolipoprotein, the first step in the formation of mature lipoproteins. This chain is Phosphatidylglycerol--prolipoprotein diacylglyceryl transferase, found in Leptothrix cholodnii (strain ATCC 51168 / LMG 8142 / SP-6) (Leptothrix discophora (strain SP-6)).